The following is a 444-amino-acid chain: ATPase PAAT (444 aa).

Phosphoserine occurs at positions 177, 182, 254, and 302. Positions 424 to 444 (PSPGMPLRHYDSRERLSNGER) are disordered. Residues 431–444 (RHYDSRERLSNGER) show a composition bias toward basic and acidic residues.

In terms of assembly, homodimer. Interacts with ABCB7, ABCB8/MITOSUR and ABCB10.

It is found in the cytoplasm. Its subcellular location is the mitochondrion. It catalyses the reaction ATP + H2O = ADP + phosphate + H(+). Its function is as follows. ATPase that regulates mitochondrial ABC transporters ABCB7, ABCB8/MITOSUR and ABCB10. Regulates mitochondrial ferric concentration and heme biosynthesis and plays a role in the maintenance of mitochondrial homeostasis and cell survival. This chain is ATPase PAAT, found in Rattus norvegicus (Rat).